Reading from the N-terminus, the 605-residue chain is Elongation factor 4 (605 aa).

The tr-type G domain maps to 9–191 (DTIRNFCIIA…AIIKRVPAPV (183 aa)). GTP is bound by residues 21–26 (DHGKST) and 138–141 (NKID).

This sequence belongs to the TRAFAC class translation factor GTPase superfamily. Classic translation factor GTPase family. LepA subfamily.

The protein resides in the cell inner membrane. The catalysed reaction is GTP + H2O = GDP + phosphate + H(+). Functionally, required for accurate and efficient protein synthesis under certain stress conditions. May act as a fidelity factor of the translation reaction, by catalyzing a one-codon backward translocation of tRNAs on improperly translocated ribosomes. Back-translocation proceeds from a post-translocation (POST) complex to a pre-translocation (PRE) complex, thus giving elongation factor G a second chance to translocate the tRNAs correctly. Binds to ribosomes in a GTP-dependent manner. The chain is Elongation factor 4 from Chlorobium phaeobacteroides (strain BS1).